The following is a 384-amino-acid chain: Carbamoyl phosphate synthase small chain (384 aa).

Positions 1–192 (MIKKIPAILV…LADRNREKIY (192 aa)) are CPSase. 3 residues coordinate L-glutamine: Ser-51, Gly-244, and Gly-246. Positions 196-382 (KVIVIDFGVK…IEIMKQFRKE (187 aa)) constitute a Glutamine amidotransferase type-1 domain. Cys-272 (nucleophile) is an active-site residue. L-glutamine is bound by residues Met-273, Gln-276, Asn-312, Gly-314, and Phe-315. Catalysis depends on residues His-355 and Glu-357.

Belongs to the CarA family. As to quaternary structure, composed of two chains; the small (or glutamine) chain promotes the hydrolysis of glutamine to ammonia, which is used by the large (or ammonia) chain to synthesize carbamoyl phosphate. Tetramer of heterodimers (alpha,beta)4.

The protein resides in the plastid. It localises to the chloroplast. It catalyses the reaction hydrogencarbonate + L-glutamine + 2 ATP + H2O = carbamoyl phosphate + L-glutamate + 2 ADP + phosphate + 2 H(+). The catalysed reaction is L-glutamine + H2O = L-glutamate + NH4(+). It functions in the pathway amino-acid biosynthesis; L-arginine biosynthesis; carbamoyl phosphate from bicarbonate: step 1/1. Its pathway is pyrimidine metabolism; UMP biosynthesis via de novo pathway; (S)-dihydroorotate from bicarbonate: step 1/3. Functionally, small subunit of the glutamine-dependent carbamoyl phosphate synthetase (CPSase). CPSase catalyzes the formation of carbamoyl phosphate from the ammonia moiety of glutamine, carbonate, and phosphate donated by ATP, constituting the first step of 2 biosynthetic pathways, one leading to arginine and/or urea and the other to pyrimidine nucleotides. The small subunit (glutamine amidotransferase) binds and cleaves glutamine to supply the large subunit with the substrate ammonia. This chain is Carbamoyl phosphate synthase small chain, found in Porphyra purpurea (Red seaweed).